The chain runs to 379 residues: tRNA (guanine(26)-N(2))-dimethyltransferase (379 aa).

Positions 4 to 375 constitute a Trm1 methyltransferase domain; it reads VEVLEGKAKI…APYEVFVNVL (372 aa). 5 residues coordinate S-adenosyl-L-methionine: arginine 36, arginine 61, aspartate 78, aspartate 120, and alanine 121.

It belongs to the class I-like SAM-binding methyltransferase superfamily. Trm1 family.

The enzyme catalyses guanosine(26) in tRNA + 2 S-adenosyl-L-methionine = N(2)-dimethylguanosine(26) in tRNA + 2 S-adenosyl-L-homocysteine + 2 H(+). Functionally, dimethylates a single guanine residue at position 26 of a number of tRNAs using S-adenosyl-L-methionine as donor of the methyl groups. This Pyrococcus abyssi (strain GE5 / Orsay) protein is tRNA (guanine(26)-N(2))-dimethyltransferase.